The following is a 520-amino-acid chain: Alkyl hydroperoxide reductase subunit F (520 aa).

FAD is bound at residue 213 to 228 (DVLVVGGGPAGAAAAI). Cys343 and Cys346 are disulfide-bonded. 355 to 369 (RVAVIGGGNSGVEAA) provides a ligand contact to NAD(+). 476–486 (TSIPGVFAAGD) serves as a coordination point for FAD.

It belongs to the class-II pyridine nucleotide-disulfide oxidoreductase family. Homodimer. FAD serves as cofactor.

Its function is as follows. Serves to protect the cell against DNA damage by alkyl hydroperoxides. It can use either NADH or NADPH as electron donor for direct reduction of redox dyes or of alkyl hydroperoxides when combined with the AhpC protein. The protein is Alkyl hydroperoxide reductase subunit F (ahpF) of Pseudomonas putida (Arthrobacter siderocapsulatus).